Reading from the N-terminus, the 175-residue chain is MGRTLENKQQIVGELKELLADAELALVLDFKGLSIKEMSDLRDRLRASDSVCKVTKNTLMRRAIDGDSNWASLDSLLTGTNAFVLVKGDVGAGVKAVQTFQKELKKSETKGGLFEGKLLSQDEIKAIADLPSKEQLMAQIAGAINAVATKVAVGINEVPSGMARALKQHAEGGEG.

The protein belongs to the universal ribosomal protein uL10 family. In terms of assembly, part of the ribosomal stalk of the 50S ribosomal subunit. The N-terminus interacts with L11 and the large rRNA to form the base of the stalk. The C-terminus forms an elongated spine to which L12 dimers bind in a sequential fashion forming a multimeric L10(L12)X complex.

Its function is as follows. Forms part of the ribosomal stalk, playing a central role in the interaction of the ribosome with GTP-bound translation factors. The chain is Large ribosomal subunit protein uL10 from Synechococcus sp. (strain CC9605).